The chain runs to 225 residues: CRISPR pre-crRNA endoribonuclease Cas5d (225 aa).

Belongs to the CRISPR-associated protein Cas5 family. Subtype I-C/Dvulg subfamily. Requires Does not require a metal cofactor. as cofactor.

CRISPR (clustered regularly interspaced short palindromic repeat) is an adaptive immune system that provides protection against mobile genetic elements (viruses, transposable elements and conjugative plasmids). CRISPR clusters contain spacers, sequences complementary to antecedent mobile elements, and target invading nucleic acids. CRISPR clusters are transcribed and processed into CRISPR RNA (crRNA). This protein is a sequence-specific endonuclease that cleaves pre-crRNA at G21 into mature crRNA. Does not cleave pre-crRNA associated with the T.thermophilus strain HB27 Cas5 protein (AC Q746C2) CRISPR locus. The reaction mechanism may proceed by an intramolecular attack of the 2'-hydroxyl group of G21 on the scissile phosphodiester, cutting the precursor 3' to G21 residue yielding 5'-hydroxyl and 2' and/or 3' ends lacking a hydroxyl group (perhaps a 2'/3' cyclic phosphodiester). This chain is CRISPR pre-crRNA endoribonuclease Cas5d, found in Mannheimia succiniciproducens (strain KCTC 0769BP / MBEL55E).